Reading from the N-terminus, the 726-residue chain is Dipeptidyl-peptidase 5 (726 aa).

A signal peptide spans Met-1–Ala-19. Residues Asn-96 and Asn-252 are each glycosylated (N-linked (GlcNAc...) asparagine). The disordered stretch occupies residues Val-268–Val-292. A glycan (N-linked (GlcNAc...) asparagine) is linked at Asn-485. Ser-558 serves as the catalytic Charge relay system. The N-linked (GlcNAc...) asparagine glycan is linked to Asn-605. Residues Asp-641 and His-673 each act as charge relay system in the active site. An N-linked (GlcNAc...) asparagine glycan is attached at Asn-699.

Belongs to the peptidase S9C family.

Its subcellular location is the secreted. In terms of biological role, extracellular dipeptidyl-peptidase which removes N-terminal dipeptides sequentially from polypeptides having unsubstituted N-termini. Contributes to pathogenicity. The chain is Dipeptidyl-peptidase 5 (DPP5) from Arthroderma otae (strain ATCC MYA-4605 / CBS 113480) (Microsporum canis).